The chain runs to 45 residues: Mu-conotoxin-like Cal 12.1.2a (45 aa).

4 disulfides stabilise this stretch: cysteine 3-cysteine 16, cysteine 11-cysteine 28, cysteine 18-cysteine 33, and cysteine 27-cysteine 39. Proline 23 carries the 4-hydroxyproline modification. A 6'-bromotryptophan mark is found at tryptophan 37 and tryptophan 38. 4-hydroxyproline is present on proline 40. 6'-bromotryptophan is present on tryptophan 44.

As to expression, expressed by the venom duct.

The protein resides in the secreted. Its function is as follows. Mu-conotoxins block voltage-gated sodium channels. This toxin reversibly blocks voltage-gated sodium channel in cephalopods, with no alteration in the voltage dependence of sodium conductance or on the kinetics of inactivation. This is Mu-conotoxin-like Cal 12.1.2a from Californiconus californicus (California cone).